The following is a 612-amino-acid chain: Alpha-1,3-galactosidase B (612 aa).

Positions 1-19 (MKWYLWGAVVLLYSLFGSA) are cleaved as a signal peptide. The N-palmitoyl cysteine moiety is linked to residue Cys-20. Cys-20 carries the S-diacylglycerol cysteine lipid modification. PbH1 repeat units follow at residues 431–453 (TPTV…LFST), 454–476 (PRQT…LLCG), and 487–536 (CRNV…VIDA).

This sequence belongs to the glycosyl hydrolase 110 family. B subfamily.

It localises to the cell membrane. The catalysed reaction is Hydrolysis of terminal, non-reducing branched (1-&gt;3)-alpha-D-galactosidic residues, producing free D-galactose.. It catalyses the reaction Hydrolysis of terminal, non-reducing linear (1-&gt;3)-alpha-D-galactosidic residues, producing free D-galactose.. It carries out the reaction Hydrolysis of terminal, non-reducing alpha-D-galactose residues in alpha-D-galactosides, including galactose oligosaccharides, galactomannans and galactolipids.. In terms of biological role, alpha-galactosidase. Removes both branched alpha-1,3-linked galactose residues of blood group B antigens and linear alpha-1,3-linked galactose structures. This is Alpha-1,3-galactosidase B (glaB) from Parabacteroides distasonis (strain ATCC 8503 / DSM 20701 / CIP 104284 / JCM 5825 / NCTC 11152).